We begin with the raw amino-acid sequence, 517 residues long: MDIIGGQHLRQMWDDLADVYGHKTALICESSSGVVNRYSYLELNQEINRTANLFYTLGIRKGDKVALHLDNCPEFIFCWFGLAKIGAIMVPINARLLREESTWILQNSQACLLVTSAQFYPMYQQIQQEDASQLRHICLTDMVLPADDGVSSFTQLKNQQPATLCYAPPLSTDDTAEILFTSGTTSRPKGVVITHYNLRFAGYYSAWQCALRDDDVYLTVMPAFHIDCQCTAAMAAFSAGATFVLVEKYSARAFWGQVQKYRATITECIPMMIRTLMVQPLSANDQQHRLREVMFYLNLSEQEKDAFCERFSVRLLTSYGMTETIVGIIGDRPGDKRRWPSIGRAGFCYEAEIRDDHNRPLPAGELGEICIKGVPGKTIFKEYFLNPKATAKVLEADGWLHTGDTGYRDEEGFFYFVDRRCNMIKRGGENVSCVELENIIATHPKIQDIVVVGIKDSIRDEAIKAFVVLNEGETLSEEEFFCFCEQNMAKFKVPSYLEIRKDLPRNCSGKIIRKNLK.

This sequence belongs to the ATP-dependent AMP-binding enzyme family.

The enzyme catalyses 4-(trimethylamino)butanoate + ATP + CoA = 4-(trimethylamino)butanoyl-CoA + AMP + diphosphate. The catalysed reaction is crotonobetaine + ATP + CoA = crotonobetainyl-CoA + AMP + diphosphate. It catalyses the reaction (R)-carnitine + ATP + CoA = (R)-carnitinyl-CoA + AMP + diphosphate. It functions in the pathway amine and polyamine metabolism; carnitine metabolism. Catalyzes the transfer of CoA to carnitine, generating the initial carnitinyl-CoA needed for the CaiB reaction cycle. Also has activity toward crotonobetaine and gamma-butyrobetaine. In Escherichia coli O6:K15:H31 (strain 536 / UPEC), this protein is Crotonobetaine/carnitine--CoA ligase.